A 234-amino-acid polypeptide reads, in one-letter code: Putative ankyrin repeat protein RF_0063 (234 aa).

2 ANK repeats span residues 149–180 and 184–213; these read NNNTALHYAVDKNLEKLSISLINKMSIETISI and YNNTALHYATDNGLEVISWFLINNMTQKAL.

In Rickettsia felis (strain ATCC VR-1525 / URRWXCal2) (Rickettsia azadi), this protein is Putative ankyrin repeat protein RF_0063.